The sequence spans 168 residues: CASP-like protein 1U1 (168 aa).

Residues 1 to 6 (MDGAAR) are Cytoplasmic-facing. The chain crosses the membrane as a helical span at residues 7 to 27 (AVSLFFRIAVVGLSVAAAVVM). Residues 28–49 (ATASQAFPFNYGGAVSYTKYPA) are Extracellular-facing. The chain crosses the membrane as a helical span at residues 50–70 (FVYFVVAAVVSAVCSAAALYL). Over 71 to 80 (SVVREAAAGW) the chain is Cytoplasmic. A helical transmembrane segment spans residues 81–101 (AVALLDVVTMGLLFSAAGAVF). Residues 102–138 (AVRRMAPLYLGVAGADTVAGRWVNGEFCHAAGAFCWR) lie on the Extracellular side of the membrane. A helical transmembrane segment spans residues 139 to 159 (VTTSAIICAFAAAAVSVAVLT). Residues 160–168 (KGARHRGKH) are Cytoplasmic-facing.

It belongs to the Casparian strip membrane proteins (CASP) family. As to quaternary structure, homodimer and heterodimers.

Its subcellular location is the cell membrane. The chain is CASP-like protein 1U1 from Oryza sativa subsp. japonica (Rice).